The primary structure comprises 119 residues: MRTRGGIVTKRRRNKWLKLAKGYWGHKSIGFKVAKQAVVKSWTYAFRDRKQLKREFRKLWIARINAAARPLGITYSRLIEGLKVANIQINRKMLSELAINYPTAFSQIVEKAKTSLAKK.

This sequence belongs to the bacterial ribosomal protein bL20 family.

Functionally, binds directly to 23S ribosomal RNA and is necessary for the in vitro assembly process of the 50S ribosomal subunit. It is not involved in the protein synthesizing functions of that subunit. The sequence is that of Large ribosomal subunit protein bL20 from Metamycoplasma arthritidis (strain 158L3-1) (Mycoplasma arthritidis).